The sequence spans 95 residues: Large ribosomal subunit protein bL28 (95 aa).

It belongs to the bacterial ribosomal protein bL28 family.

The sequence is that of Large ribosomal subunit protein bL28 from Dinoroseobacter shibae (strain DSM 16493 / NCIMB 14021 / DFL 12).